The sequence spans 432 residues: Adenylosuccinate synthetase (432 aa).

GTP is bound by residues 13-19 (GDEGKGK) and 41-43 (GHT). D14 functions as the Proton acceptor in the catalytic mechanism. The Mg(2+) site is built by D14 and G41. IMP contacts are provided by residues 14-17 (DEGK), 39-42 (NAGH), T130, R144, Q225, T240, and R304. H42 (proton donor) is an active-site residue. 300–306 (ATTGRRR) serves as a coordination point for substrate. GTP is bound by residues R306, 332-334 (KLD), and 415-417 (STG).

This sequence belongs to the adenylosuccinate synthetase family. Homodimer. Mg(2+) serves as cofactor.

It localises to the cytoplasm. The catalysed reaction is IMP + L-aspartate + GTP = N(6)-(1,2-dicarboxyethyl)-AMP + GDP + phosphate + 2 H(+). The protein operates within purine metabolism; AMP biosynthesis via de novo pathway; AMP from IMP: step 1/2. Its function is as follows. Plays an important role in the de novo pathway of purine nucleotide biosynthesis. Catalyzes the first committed step in the biosynthesis of AMP from IMP. In Pectobacterium atrosepticum (strain SCRI 1043 / ATCC BAA-672) (Erwinia carotovora subsp. atroseptica), this protein is Adenylosuccinate synthetase.